The chain runs to 450 residues: Hydrolase ffsE (450 aa).

Catalysis depends on Ser266, which acts as the Nucleophile.

This sequence belongs to the AB hydrolase superfamily. FUS2 hydrolase family. In terms of assembly, homodimer.

It participates in mycotoxin biosynthesis. Its function is as follows. Hydrolase; part of the gene cluster that mediates the biosynthesis of the cytotoxic leucine-containing cytochalasans, including aspochalasin C, aspochalasin E, TMC-169, flavichalasine F, aspergillin PZ, aspochalasin M and flavichalasine G. The first step in the pathway is catalyzed by the hybrid PKS-NRPS ffsA that utilizes 8 units of malonyl-CoA to iteratively assemble the octaketide chain before addition of L-leucine by the C-terminal NRPS modules. Because ffsA lacks a designated enoylreductase (ER) domain, the required activity is provided the enoyl reductase fssC. The methyltransferase (MT) domain of ffsA catalyzes the alpha-methylation at C10 and C14 using S-adenosyl-L-methionine as the methyl-donating cosubstrate. Reduction by the hydrolyase ffsE, followed by dehydration and intra-molecular Diels-Alder cyclization by the Diels-Alderase ffsF then yield the required isoindolone-fused macrocycle. A number of oxidative steps catalyzed by the tailoring cytochrome P450 monooxygenase ffsD, the FAD-linked oxidoreductase ffsJ and the short-chain dehydrogenase/reductase ffsI, are further required to afford the final products. This chain is Hydrolase ffsE, found in Aspergillus flavipes.